Reading from the N-terminus, the 176-residue chain is Probable DNA-directed RNA polymerase subunit delta (176 aa).

The 68-residue stretch at leucine 14–tryptophan 81 folds into the HTH HARE-type domain. Disordered stretches follow at residues valine 91–aspartate 119 and aspartate 140–lysine 176. 2 stretches are compositionally biased toward acidic residues: residues aspartate 105–aspartate 119 and threonine 159–lysine 176.

This sequence belongs to the RpoE family. RNAP is composed of a core of 2 alpha, a beta and a beta' subunits. The core is associated with a delta subunit and one of several sigma factors.

Functionally, participates in both the initiation and recycling phases of transcription. In the presence of the delta subunit, RNAP displays an increased specificity of transcription, a decreased affinity for nucleic acids, and an increased efficiency of RNA synthesis because of enhanced recycling. This Listeria welshimeri serovar 6b (strain ATCC 35897 / DSM 20650 / CCUG 15529 / CIP 8149 / NCTC 11857 / SLCC 5334 / V8) protein is Probable DNA-directed RNA polymerase subunit delta.